Here is a 370-residue protein sequence, read N- to C-terminus: Cytochrome b (370 aa).

4 helical membrane passes run 25-45, 69-90, 105-125, and 170-190; these read FGSM…FLAV, WMMQ…YIHI, WLSG…GYVL, and FFAL…LHIL. Heme b contacts are provided by H75 and H89. 2 residues coordinate heme b: H174 and H188. H193 contributes to the a ubiquinone binding site. 4 consecutive transmembrane segments (helical) span residues 218–238, 280–300, 312–332, and 339–358; these read YKDM…VSFF, LGGA…PFTH, LMQL…WTAT, and FTTI…ISNP.

This sequence belongs to the cytochrome b family. The cytochrome bc1 complex contains 3 respiratory subunits (MT-CYB, CYC1 and UQCRFS1), 2 core proteins (UQCRC1 and UQCRC2) and probably 6 low-molecular weight proteins. Heme b serves as cofactor.

The protein localises to the mitochondrion inner membrane. Its function is as follows. Component of the ubiquinol-cytochrome c reductase complex (complex III or cytochrome b-c1 complex) that is part of the mitochondrial respiratory chain. The b-c1 complex mediates electron transfer from ubiquinol to cytochrome c. Contributes to the generation of a proton gradient across the mitochondrial membrane that is then used for ATP synthesis. The protein is Cytochrome b (MT-CYB) of Chilabothrus striatus (Haitian boa constrictor).